The sequence spans 309 residues: Probable 3-hydroxyacyl-CoA dehydrogenase B0272.3 (309 aa).

Belongs to the 3-hydroxyacyl-CoA dehydrogenase family. In terms of assembly, homodimer.

The protein localises to the mitochondrion matrix. It catalyses the reaction a (3S)-3-hydroxyacyl-CoA + NAD(+) = a 3-oxoacyl-CoA + NADH + H(+). The protein operates within lipid metabolism; fatty acid beta-oxidation. The protein is Probable 3-hydroxyacyl-CoA dehydrogenase B0272.3 of Caenorhabditis elegans.